The sequence spans 669 residues: DNA ligase (669 aa).

NAD(+) contacts are provided by residues 31–35, 80–81, and Glu-112; these read DAEYD and SL. The active-site N6-AMP-lysine intermediate is the Lys-114. NAD(+) is bound by residues Arg-135, Glu-172, Lys-289, and Lys-313. Residues Cys-407, Cys-410, Cys-425, and Cys-431 each contribute to the Zn(2+) site. A BRCT domain is found at 591-669; that stretch reads SVPQPLADKV…EEQLIEILNN (79 aa).

This sequence belongs to the NAD-dependent DNA ligase family. LigA subfamily. It depends on Mg(2+) as a cofactor. Mn(2+) serves as cofactor.

It catalyses the reaction NAD(+) + (deoxyribonucleotide)n-3'-hydroxyl + 5'-phospho-(deoxyribonucleotide)m = (deoxyribonucleotide)n+m + AMP + beta-nicotinamide D-nucleotide.. In terms of biological role, DNA ligase that catalyzes the formation of phosphodiester linkages between 5'-phosphoryl and 3'-hydroxyl groups in double-stranded DNA using NAD as a coenzyme and as the energy source for the reaction. It is essential for DNA replication and repair of damaged DNA. The sequence is that of DNA ligase from Aliivibrio salmonicida (strain LFI1238) (Vibrio salmonicida (strain LFI1238)).